The primary structure comprises 117 residues: Protein Wnt-6 (117 aa).

Serine 1 carries the O-palmitoleoyl serine; by PORCN lipid modification. A disulfide bond links cysteine 83 and cysteine 98. Residue asparagine 84 is glycosylated (N-linked (GlcNAc...) asparagine).

The protein belongs to the Wnt family. In terms of processing, palmitoleoylation is required for efficient binding to frizzled receptors. Depalmitoleoylation leads to Wnt signaling pathway inhibition.

The protein localises to the secreted. It is found in the extracellular space. It localises to the extracellular matrix. Ligand for members of the frizzled family of seven transmembrane receptors. Probable developmental protein. May be a signaling molecule which affects the development of discrete regions of tissues. Is likely to signal over only few cell diameters. The sequence is that of Protein Wnt-6 (WNT-6) from Evasterias troschelii (Mottled sea star).